The primary structure comprises 234 residues: Glycoprotein BDLF3 (234 aa).

Positions 1 to 28 (MAHARDKAGAVMAMILICETSLIWTSSG) are cleaved as a signal peptide. Residues 29–62 (SSTASAGNVTGTTAVTTPSPSASGPSTNQSTTLT) are disordered. Asparagine 36, asparagine 56, asparagine 77, asparagine 96, asparagine 101, asparagine 110, asparagine 127, asparagine 144, and asparagine 159 each carry an N-linked (GlcNAc...) asparagine; by host glycan. The segment at 116–138 (AGTGTSTGVTSNVTTRSSSTTSA) is disordered. A helical membrane pass occupies residues 187–207 (LVFVGLTFLMLILIFAAGLMM).

It belongs to the Epstein-Barr virus BDLF3 protein family.

Its subcellular location is the membrane. The chain is Glycoprotein BDLF3 from Homo sapiens (Human).